We begin with the raw amino-acid sequence, 109 residues long: MAQIDNYDLFFSKMISDNITSKLFMKLTITIIITLVIIFIIFTLIILYFIKNKKQDHCINCKVENLDSSIKIDKNNTQKDYPSNFGFVEFPSELLGYNPKKFDNYAYIH.

The chain crosses the membrane as a helical span at residues 29 to 49 (ITIIITLVIIFIIFTLIILYF).

The protein resides in the membrane. This is an uncharacterized protein from Sputnik virophage.